The following is a 501-amino-acid chain: Ribose import ATP-binding protein RbsA (501 aa).

2 consecutive ABC transporter domains span residues L6–K242 and K253–K495. ATP is bound at residue G38–S45.

Belongs to the ABC transporter superfamily. Ribose importer (TC 3.A.1.2.1) family. As to quaternary structure, the complex is composed of an ATP-binding protein (RbsA), two transmembrane proteins (RbsC) and a solute-binding protein (RbsB).

Its subcellular location is the cell inner membrane. The enzyme catalyses D-ribose(out) + ATP + H2O = D-ribose(in) + ADP + phosphate + H(+). Functionally, part of the ABC transporter complex RbsABC involved in ribose import. Responsible for energy coupling to the transport system. The protein is Ribose import ATP-binding protein RbsA of Vibrio parahaemolyticus serotype O3:K6 (strain RIMD 2210633).